A 425-amino-acid polypeptide reads, in one-letter code: Dihydroorotase (425 aa).

Residues H56 and H58 each contribute to the Zn(2+) site. Residues 58–60 (HYR) and N90 contribute to the substrate site. The Zn(2+) site is built by D148, H175, and H228. Residue N274 participates in substrate binding. Position 301 (D301) interacts with Zn(2+). D301 is a catalytic residue. Residues H305 and 319-320 (FG) each bind substrate.

The protein belongs to the metallo-dependent hydrolases superfamily. DHOase family. Class I DHOase subfamily. The cofactor is Zn(2+).

The enzyme catalyses (S)-dihydroorotate + H2O = N-carbamoyl-L-aspartate + H(+). It functions in the pathway pyrimidine metabolism; UMP biosynthesis via de novo pathway; (S)-dihydroorotate from bicarbonate: step 3/3. Its function is as follows. Catalyzes the reversible cyclization of carbamoyl aspartate to dihydroorotate. The sequence is that of Dihydroorotase from Lactobacillus johnsonii (strain CNCM I-12250 / La1 / NCC 533).